The sequence spans 784 residues: Transcription factor kayak (784 aa).

Low complexity-rich tracts occupy residues 97–106 (QPTQSAYQQQ), 115–126 (NNNNNSNNNANM), and 198–227 (QQQQQSQQQQQSQQQQQSQQQQQSQQQQQQ). Disordered stretches follow at residues 97 to 126 (QPTQSAYQQQNAKQSYGHNNNNNSNNNANM), 196 to 231 (YNQQQQQSQQQQQSQQQQQSQQQQQSQQQQQQHLPT), 358 to 404 (PGSD…GNGS), and 421 to 464 (SGRG…KRRI). The segment covering 365-378 (SNGSWNEGQLNDDQ) has biased composition (polar residues). A compositionally biased stretch (low complexity) spans 380–397 (TTDTSSAATDSTSYQNGG). The segment covering 421 to 438 (SGRGSGLAANSTTSNSAT) has biased composition (polar residues). Residues 459 to 522 (EEKRRIRRER…SQLEYVLQTH (64 aa)) form the bZIP domain. Residues 461–463 (KRR) form a basic motif region. Residues 464-471 (IRRERNKL) form a leucine-zipper region. Phosphoserine is present on serine 594. 2 disordered regions span residues 616 to 635 (QDGAIDSGSSLDQDGPTPAK) and 759 to 784 (PTCSSQNKHPLELPTPTSEPSKLVSL).

This sequence belongs to the bZIP family. Fos subfamily. As to quaternary structure, homodimer. Heterodimer with Jra. The kay-Jra heterodimer binds more stably to the AP-1 site than either of the two proteins alone.

The protein localises to the nucleus. Its function is as follows. Developmentally regulated transcription factor AP-1 binds and recognizes the enhancer DNA sequence: 5'-TGA[CG]TCA-3'. May play a role in the function or determination of a particular subset of cells in the developing embryo. It is able to carry out its function either independently of or in conjunction with Jra. The protein is Transcription factor kayak of Drosophila mojavensis (Fruit fly).